The sequence spans 104 residues: Large ribosomal subunit protein uL24 (104 aa).

The protein belongs to the universal ribosomal protein uL24 family. In terms of assembly, part of the 50S ribosomal subunit.

Functionally, one of two assembly initiator proteins, it binds directly to the 5'-end of the 23S rRNA, where it nucleates assembly of the 50S subunit. In terms of biological role, one of the proteins that surrounds the polypeptide exit tunnel on the outside of the subunit. This Bartonella bacilliformis (strain ATCC 35685 / KC583 / Herrer 020/F12,63) protein is Large ribosomal subunit protein uL24.